A 434-amino-acid chain; its full sequence is Chaperone SurA (434 aa).

A signal peptide spans 1-22; sequence MKHSKKIVTALLALAMSQTVMA. PpiC domains are found at residues 173-274 and 283-383; these read EVEF…KVMD and VEEV…QLMD.

The protein localises to the periplasm. It catalyses the reaction [protein]-peptidylproline (omega=180) = [protein]-peptidylproline (omega=0). Functionally, chaperone involved in the correct folding and assembly of outer membrane proteins. Recognizes specific patterns of aromatic residues and the orientation of their side chains, which are found more frequently in integral outer membrane proteins. May act in both early periplasmic and late outer membrane-associated steps of protein maturation. In Shewanella denitrificans (strain OS217 / ATCC BAA-1090 / DSM 15013), this protein is Chaperone SurA.